A 104-amino-acid chain; its full sequence is Small ribosomal subunit protein uS10 (104 aa).

The protein belongs to the universal ribosomal protein uS10 family. As to quaternary structure, part of the 30S ribosomal subunit.

Its function is as follows. Involved in the binding of tRNA to the ribosomes. In Thermosynechococcus vestitus (strain NIES-2133 / IAM M-273 / BP-1), this protein is Small ribosomal subunit protein uS10.